The sequence spans 377 residues: DNA-directed RNA polymerase subunit alpha (377 aa).

The interval 1–259 is alpha N-terminal domain (alpha-NTD); the sequence is MSDSSHNLLY…KHFSVFEKMD (259 aa). The segment at 276–377 is alpha C-terminal domain (alpha-CTD); the sequence is KDDILHKLVL…KIRSSKNTKG (102 aa).

It belongs to the RNA polymerase alpha chain family. As to quaternary structure, homodimer. The RNAP catalytic core consists of 2 alpha, 1 beta, 1 beta' and 1 omega subunit. When a sigma factor is associated with the core the holoenzyme is formed, which can initiate transcription.

It catalyses the reaction RNA(n) + a ribonucleoside 5'-triphosphate = RNA(n+1) + diphosphate. DNA-dependent RNA polymerase catalyzes the transcription of DNA into RNA using the four ribonucleoside triphosphates as substrates. The sequence is that of DNA-directed RNA polymerase subunit alpha from Chlamydia trachomatis serovar D (strain ATCC VR-885 / DSM 19411 / UW-3/Cx).